A 208-amino-acid chain; its full sequence is Uracil phosphoribosyltransferase (208 aa).

5-phospho-alpha-D-ribose 1-diphosphate-binding positions include arginine 78, arginine 103, and 130–138; that span reads DPMFATGGT. Residues isoleucine 193 and 198–200 each bind uracil; that span reads GDA. Aspartate 199 serves as a coordination point for 5-phospho-alpha-D-ribose 1-diphosphate.

This sequence belongs to the UPRTase family. The cofactor is Mg(2+).

The enzyme catalyses UMP + diphosphate = 5-phospho-alpha-D-ribose 1-diphosphate + uracil. It participates in pyrimidine metabolism; UMP biosynthesis via salvage pathway; UMP from uracil: step 1/1. Its activity is regulated as follows. Allosterically activated by GTP. In terms of biological role, catalyzes the conversion of uracil and 5-phospho-alpha-D-ribose 1-diphosphate (PRPP) to UMP and diphosphate. The polypeptide is Uracil phosphoribosyltransferase (Campylobacter jejuni subsp. jejuni serotype O:2 (strain ATCC 700819 / NCTC 11168)).